Here is a 360-residue protein sequence, read N- to C-terminus: Peptide chain release factor 1 (360 aa).

Glutamine 235 carries the post-translational modification N5-methylglutamine.

This sequence belongs to the prokaryotic/mitochondrial release factor family. Post-translationally, methylated by PrmC. Methylation increases the termination efficiency of RF1.

It localises to the cytoplasm. In terms of biological role, peptide chain release factor 1 directs the termination of translation in response to the peptide chain termination codons UAG and UAA. The protein is Peptide chain release factor 1 of Paraburkholderia phymatum (strain DSM 17167 / CIP 108236 / LMG 21445 / STM815) (Burkholderia phymatum).